The primary structure comprises 393 residues: Bifunctional enzyme Fae/Hps (393 aa).

The formaldehyde-activating enzyme stretch occupies residues 1 to 161; the sequence is MYQIGEALVG…YEKDRGAHAV (161 aa). Catalysis depends on His-17, which acts as the Proton donor. Substrate contacts are provided by Asp-19, Leu-48, Lys-66, Thr-68, and Gln-83. The 3-hexulose-6-phosphate synthase stretch occupies residues 162 to 393; that stretch reads MGFKVQRLWD…IDQFRVMTDF (232 aa).

In the N-terminal section; belongs to the formaldehyde-activating enzyme family. The protein in the C-terminal section; belongs to the HPS/KGPDC family. HPS subfamily.

It carries out the reaction 5,6,7,8-tetrahydromethanopterin + formaldehyde = 5,10-methylenetetrahydromethanopterin + H2O. The enzyme catalyses D-ribulose 5-phosphate + formaldehyde = D-arabino-hex-3-ulose 6-phosphate. It participates in carbohydrate biosynthesis; D-ribose 5-phosphate biosynthesis. Its function is as follows. Catalyzes the condensation of formaldehyde with tetrahydromethanopterin (H(4)MPT) to 5,10-methylenetetrahydromethanopterin. Functionally, catalyzes the reversible formation of ribulose-5-phosphate and formaldehyde from 3-hexulose-6-phosphate. This is Bifunctional enzyme Fae/Hps from Methanosphaerula palustris (strain ATCC BAA-1556 / DSM 19958 / E1-9c).